A 121-amino-acid polypeptide reads, in one-letter code: uncharacterized protein (121 aa).

A signal peptide spans 1–31 (MILNNKGFIRILEATIAGIMVILVFSYLVMS).

This sequence to B.burgdorferi BB0465 N-terminal region.

This is an uncharacterized protein from Methanocaldococcus jannaschii (strain ATCC 43067 / DSM 2661 / JAL-1 / JCM 10045 / NBRC 100440) (Methanococcus jannaschii).